We begin with the raw amino-acid sequence, 426 residues long: High affinity 3',5'-cyclic-AMP phosphodiesterase 7A (426 aa).

Residues 80-402 enclose the PDEase domain; the sequence is LDEDYNGQAK…ASWKGLQRQQ (323 aa). His156 serves as the catalytic Proton donor. Residues His160, His196, Asp197, and Asp306 each coordinate a divalent metal cation.

Belongs to the cyclic nucleotide phosphodiesterase family. PDE7 subfamily. In terms of assembly, interacts with CBFA2T3. A divalent metal cation is required as a cofactor.

Its subcellular location is the cytoplasm. It is found in the cytosol. The catalysed reaction is 3',5'-cyclic AMP + H2O = AMP + H(+). It participates in purine metabolism; 3',5'-cyclic AMP degradation; AMP from 3',5'-cyclic AMP: step 1/1. Hydrolyzes the second messenger cAMP, which is a key regulator of many important physiological processes. May have a role in muscle signal transduction. The chain is High affinity 3',5'-cyclic-AMP phosphodiesterase 7A (Pde7a) from Rattus norvegicus (Rat).